The chain runs to 171 residues: Peptide methionine sulfoxide reductase MsrA (171 aa).

Residue C13 is part of the active site.

Belongs to the MsrA Met sulfoxide reductase family.

It carries out the reaction L-methionyl-[protein] + [thioredoxin]-disulfide + H2O = L-methionyl-(S)-S-oxide-[protein] + [thioredoxin]-dithiol. It catalyses the reaction [thioredoxin]-disulfide + L-methionine + H2O = L-methionine (S)-S-oxide + [thioredoxin]-dithiol. Has an important function as a repair enzyme for proteins that have been inactivated by oxidation. Catalyzes the reversible oxidation-reduction of methionine sulfoxide in proteins to methionine. The sequence is that of Peptide methionine sulfoxide reductase MsrA from Mycobacterium sp. (strain MCS).